Consider the following 133-residue polypeptide: Small ribosomal subunit protein uS11 (133 aa).

Belongs to the universal ribosomal protein uS11 family. Part of the 30S ribosomal subunit. Interacts with proteins S7 and S18. Binds to IF-3.

Its function is as follows. Located on the platform of the 30S subunit, it bridges several disparate RNA helices of the 16S rRNA. Forms part of the Shine-Dalgarno cleft in the 70S ribosome. This chain is Small ribosomal subunit protein uS11, found in Shouchella clausii (strain KSM-K16) (Alkalihalobacillus clausii).